A 486-amino-acid polypeptide reads, in one-letter code: Cardiolipin synthase A (486 aa).

2 consecutive transmembrane segments (helical) span residues 3-23 and 38-58; these read TVYT…IAGV and MAWL…YLAV. PLD phosphodiesterase domains are found at residues 219 to 246 and 399 to 426; these read MDLR…VDPR and EGGL…DMRS. Catalysis depends on residues His224, Lys226, Asp231, His404, Lys406, and Asp411.

The protein belongs to the phospholipase D family. Cardiolipin synthase subfamily. ClsA sub-subfamily.

The protein localises to the cell inner membrane. The catalysed reaction is 2 a 1,2-diacyl-sn-glycero-3-phospho-(1'-sn-glycerol) = a cardiolipin + glycerol. Its function is as follows. Catalyzes the reversible phosphatidyl group transfer from one phosphatidylglycerol molecule to another to form cardiolipin (CL) (diphosphatidylglycerol) and glycerol. The chain is Cardiolipin synthase A from Shigella flexneri.